The sequence spans 277 residues: Urease accessory protein UreD (277 aa).

It belongs to the UreD family. UreD, UreF and UreG form a complex that acts as a GTP-hydrolysis-dependent molecular chaperone, activating the urease apoprotein by helping to assemble the nickel containing metallocenter of UreC. The UreE protein probably delivers the nickel.

The protein localises to the cytoplasm. Its function is as follows. Required for maturation of urease via the functional incorporation of the urease nickel metallocenter. The sequence is that of Urease accessory protein UreD from Flavobacterium johnsoniae (strain ATCC 17061 / DSM 2064 / JCM 8514 / BCRC 14874 / CCUG 350202 / NBRC 14942 / NCIMB 11054 / UW101) (Cytophaga johnsonae).